The primary structure comprises 230 residues: PsbP-like protein 1, chloroplastic (230 aa).

Belongs to the PsbP family.

The protein localises to the plastid. The protein resides in the chloroplast thylakoid lumen. Required for efficient repair of photodamaged PSII, but not tightly associated with the complex. The sequence is that of PsbP-like protein 1, chloroplastic (PPL1) from Arabidopsis thaliana (Mouse-ear cress).